We begin with the raw amino-acid sequence, 415 residues long: Glutamyl-tRNA reductase (415 aa).

Substrate contacts are provided by residues 49–52 (TCNR), serine 104, 109–111 (EPQ), and glutamine 115. The Nucleophile role is filled by cysteine 50. Position 184 to 189 (184 to 189 (GAGEMI)) interacts with NADP(+).

The protein belongs to the glutamyl-tRNA reductase family. Homodimer.

The catalysed reaction is (S)-4-amino-5-oxopentanoate + tRNA(Glu) + NADP(+) = L-glutamyl-tRNA(Glu) + NADPH + H(+). It participates in porphyrin-containing compound metabolism; protoporphyrin-IX biosynthesis; 5-aminolevulinate from L-glutamyl-tRNA(Glu): step 1/2. Catalyzes the NADPH-dependent reduction of glutamyl-tRNA(Glu) to glutamate 1-semialdehyde (GSA). In Neisseria meningitidis serogroup B (strain ATCC BAA-335 / MC58), this protein is Glutamyl-tRNA reductase.